The primary structure comprises 456 residues: Cysteine--tRNA ligase (456 aa).

Position 28 (C28) interacts with Zn(2+). Residues 30–40 carry the 'HIGH' region motif; sequence ITVYDHCHLGH. Zn(2+)-binding residues include C209, H234, and E238. A 'KMSKS' region motif is present at residues 266–270; sequence KMAKS. Residue K269 participates in ATP binding.

The protein belongs to the class-I aminoacyl-tRNA synthetase family. Monomer. Zn(2+) serves as cofactor.

The protein resides in the cytoplasm. It catalyses the reaction tRNA(Cys) + L-cysteine + ATP = L-cysteinyl-tRNA(Cys) + AMP + diphosphate. The protein is Cysteine--tRNA ligase of Legionella pneumophila subsp. pneumophila (strain Philadelphia 1 / ATCC 33152 / DSM 7513).